The following is a 439-amino-acid chain: Serine--tRNA ligase (439 aa).

Residue 237–239 (TAE) coordinates L-serine. Residue 268 to 270 (RAE) participates in ATP binding. An L-serine-binding site is contributed by Glu291. 362-365 (EISS) contributes to the ATP binding site. Residue Ser397 coordinates L-serine.

This sequence belongs to the class-II aminoacyl-tRNA synthetase family. Type-1 seryl-tRNA synthetase subfamily. Homodimer. The tRNA molecule binds across the dimer.

Its subcellular location is the cytoplasm. It catalyses the reaction tRNA(Ser) + L-serine + ATP = L-seryl-tRNA(Ser) + AMP + diphosphate + H(+). It carries out the reaction tRNA(Sec) + L-serine + ATP = L-seryl-tRNA(Sec) + AMP + diphosphate + H(+). It participates in aminoacyl-tRNA biosynthesis; selenocysteinyl-tRNA(Sec) biosynthesis; L-seryl-tRNA(Sec) from L-serine and tRNA(Sec): step 1/1. Catalyzes the attachment of serine to tRNA(Ser). Is also able to aminoacylate tRNA(Sec) with serine, to form the misacylated tRNA L-seryl-tRNA(Sec), which will be further converted into selenocysteinyl-tRNA(Sec). This is Serine--tRNA ligase from Afipia carboxidovorans (strain ATCC 49405 / DSM 1227 / KCTC 32145 / OM5) (Oligotropha carboxidovorans).